The primary structure comprises 285 residues: 4-hydroxybenzoate octaprenyltransferase (285 aa).

8 helical membrane passes run 28 to 48 (LWAM…WIFV), 86 to 106 (IAAW…FALV), 110 to 130 (NALT…YPFF), 133 to 153 (FFAI…PMAF), 165 to 185 (WLML…YAMV), 210 to 230 (IMLC…LLGL), 232 to 252 (WPYW…YTLI), and 262 to 284 (AAFR…AYAI).

Belongs to the UbiA prenyltransferase family. Mg(2+) is required as a cofactor.

It localises to the cell inner membrane. It carries out the reaction all-trans-octaprenyl diphosphate + 4-hydroxybenzoate = 4-hydroxy-3-(all-trans-octaprenyl)benzoate + diphosphate. Its pathway is cofactor biosynthesis; ubiquinone biosynthesis. Its function is as follows. Catalyzes the prenylation of para-hydroxybenzoate (PHB) with an all-trans polyprenyl group. Mediates the second step in the final reaction sequence of ubiquinone-8 (UQ-8) biosynthesis, which is the condensation of the polyisoprenoid side chain with PHB, generating the first membrane-bound Q intermediate 3-octaprenyl-4-hydroxybenzoate. This Cupriavidus necator (strain ATCC 17699 / DSM 428 / KCTC 22496 / NCIMB 10442 / H16 / Stanier 337) (Ralstonia eutropha) protein is 4-hydroxybenzoate octaprenyltransferase.